The chain runs to 131 residues: D-ribose pyranase (131 aa).

His-20 acts as the Proton donor in catalysis. Substrate is bound by residues Asp-28, His-98, and 120 to 122; that span reads YAN.

Belongs to the RbsD / FucU family. RbsD subfamily. Homodecamer.

Its subcellular location is the cytoplasm. It catalyses the reaction beta-D-ribopyranose = beta-D-ribofuranose. It participates in carbohydrate metabolism; D-ribose degradation; D-ribose 5-phosphate from beta-D-ribopyranose: step 1/2. In terms of biological role, catalyzes the interconversion of beta-pyran and beta-furan forms of D-ribose. The protein is D-ribose pyranase of Bacillus cereus (strain ATCC 14579 / DSM 31 / CCUG 7414 / JCM 2152 / NBRC 15305 / NCIMB 9373 / NCTC 2599 / NRRL B-3711).